The primary structure comprises 209 residues: Uracil phosphoribosyltransferase (209 aa).

Residues Arg79, Arg104, and 131–139 (DPMLATGGS) each bind 5-phospho-alpha-D-ribose 1-diphosphate. Uracil is bound by residues Ile194 and 199–201 (GDA). Asp200 serves as a coordination point for 5-phospho-alpha-D-ribose 1-diphosphate.

This sequence belongs to the UPRTase family. Mg(2+) serves as cofactor.

The catalysed reaction is UMP + diphosphate = 5-phospho-alpha-D-ribose 1-diphosphate + uracil. The protein operates within pyrimidine metabolism; UMP biosynthesis via salvage pathway; UMP from uracil: step 1/1. Its activity is regulated as follows. Allosterically activated by GTP. In terms of biological role, catalyzes the conversion of uracil and 5-phospho-alpha-D-ribose 1-diphosphate (PRPP) to UMP and diphosphate. This Bacillus pumilus (strain SAFR-032) protein is Uracil phosphoribosyltransferase.